The sequence spans 235 residues: Ribitol-5-phosphate cytidylyltransferase (235 aa).

CTP contacts are provided by residues 7-10 (LAGG), 82-88 (GADRNTS), and Ser-113.

It belongs to the IspD/TarI cytidylyltransferase family. TarI subfamily.

The enzyme catalyses D-ribitol 5-phosphate + CTP + H(+) = CDP-L-ribitol + diphosphate. It participates in cell wall biogenesis; poly(ribitol phosphate) teichoic acid biosynthesis. Catalyzes the transfer of the cytidylyl group of CTP to D-ribitol 5-phosphate. The chain is Ribitol-5-phosphate cytidylyltransferase from Streptococcus pneumoniae (strain Hungary19A-6).